The sequence spans 247 residues: Serine/threonine-protein phosphatase 2A activator (247 aa).

This sequence belongs to the PTPA-type PPIase family.

It is found in the cytoplasm. It carries out the reaction [protein]-peptidylproline (omega=180) = [protein]-peptidylproline (omega=0). In terms of biological role, PPIases accelerate the folding of proteins. It catalyzes the cis-trans isomerization of proline imidic peptide bonds in oligopeptides. Acts as a regulatory subunit for PP2A-like phosphatases modulating their activity or substrate specificity, probably by inducing a conformational change in the catalytic subunit, a direct target of the PPIase. Can reactivate inactive phosphatase PP2A-phosphatase methylesterase complexes (PP2Ai) in presence of ATP and Mg(2+) by dissociating the inactive form from the complex. This Encephalitozoon cuniculi (strain GB-M1) (Microsporidian parasite) protein is Serine/threonine-protein phosphatase 2A activator.